Reading from the N-terminus, the 145-residue chain is Late embryogenesis abundant protein D-11 (145 aa).

Positions Met1–Ala18 are enriched in polar residues. The tract at residues Met1–Ile136 is disordered. Residues Gly47–His57 are compositionally biased toward basic residues. Low complexity predominate over residues Arg58 to Ser68. The span at Lys82–Gln96 shows a compositional bias: basic and acidic residues. Positions Ser97–Gln107 are enriched in polar residues.

This sequence belongs to the plant dehydrin family.

LEA protein are late embryogenesis abundant in higher plant seed embryos. There are two subsets of LEA proteins (5a, and 5b), the first ones are expressed when the cotyledon weight reach 80 mg and the second set are expressed above 100 mg. The function of those proteins is not known. This Gossypium hirsutum (Upland cotton) protein is Late embryogenesis abundant protein D-11.